Consider the following 108-residue polypeptide: Transcription initiation factor IIA subunit 2 (108 aa).

The protein belongs to the TFIIA subunit 2 family. TFIIA is a heterodimer of the large unprocessed subunit 1 and a small subunit gamma. It was originally believed to be a heterotrimer of an alpha, a beta and a gamma subunit. Interacts with NCOA6 general coactivator. TFIIA forms a complex with TBP.

Its subcellular location is the nucleus. TFIIA is a component of the transcription machinery of RNA polymerase II and plays an important role in transcriptional activation. TFIIA in a complex with TBP mediates transcriptional activity. This is Transcription initiation factor IIA subunit 2 (gtf2a2) from Oncorhynchus mykiss (Rainbow trout).